Here is a 405-residue protein sequence, read N- to C-terminus: Deoxyguanosinetriphosphate triphosphohydrolase-like protein (405 aa).

Positions 75–219 (RLTHTIEVAQ…AAIADDIAYN (145 aa)) constitute an HD domain.

It belongs to the dGTPase family. Type 2 subfamily.

The protein is Deoxyguanosinetriphosphate triphosphohydrolase-like protein of Rhizobium leguminosarum bv. trifolii (strain WSM2304).